A 305-amino-acid chain; its full sequence is CRISPR-associated endonuclease Cas1 (305 aa).

Residues 96 to 278 form a sufficient for cleavage of ssRNA, ssDNA and Holliday junction DNA region; sequence SDKLLYQAKL…EDVLAAGEIQ (183 aa). 3 residues coordinate Mg(2+): Glu141, His208, and Asp221. Residues 278-305 are disordered; it reads QPPAPPEDAQPVAIPLPVSLGDAGHRSS.

The protein belongs to the CRISPR-associated endonuclease Cas1 family. In terms of assembly, homodimer. Part of the Cas1-Cas2 complex. Interacts with RecB, RecC, RuvB, CasC and CasE. Forms a hexamer with 2 Cas1 dimers sandwiching a Cas2 dimer. The DNA lies across a flat surface extending from 1 Cas1 dimer, across the Cas2 dimer and contacting the other Cas1 dimer. Only 1 Cas1 protein from each dimer is catalytic, the other interacts with the Cas2 dimer and possibly target DNA. Mg(2+) serves as cofactor.

It localises to the cytoplasm. Nuclease activity partially inhibited by CasE. CRISPR (clustered regularly interspaced short palindromic repeat), is an adaptive immune system that provides protection against mobile genetic elements (viruses, transposable elements and conjugative plasmids). CRISPR clusters contain sequences complementary to antecedent mobile elements and target invading nucleic acids. CRISPR clusters are transcribed and processed into CRISPR RNA (crRNA). The Cas1-Cas2 complex is involved in CRISPR adaptation, the first stage of CRISPR immunity, being required for the addition/removal of CRISPR spacers at the leader end of the CRISPR locus. The Cas1-Cas2 complex introduces staggered nicks into both strands of the CRISPR array near the leader repeat and joins the 5'-ends of the repeat strands with the 3'-ends of the new spacer sequence. Spacer DNA integration requires supercoiled target DNA and 3'-OH ends on the inserted (spacer) DNA and probably initiates with a nucleophilic attack of the C 3'-OH end of the protospacer on the minus strand of the first repeat sequence. Expression of Cas1-Cas2 in a strain lacking both genes permits spacer acquisition. Non-specifically binds DNA; the Cas1-Cas2 complex preferentially binds CRISPR-locus DNA. Highest binding is seen to a dual forked DNA complex with 3'-overhangs and a protospacer-adjacent motif-complement specifically positioned. The protospacer DNA lies across a flat surface extending from 1 Cas1 dimer, across the Cas2 dimer and contacting the other Cas1 dimer; the 23 bp-long ds section of the DNA is bracketed by 1 Tyr-22 from each of the Cas1 dimers. Cas1 cuts within the 3'-overhang, to generate a 33-nucleotide DNA that is probably incorporated into the CRISPR leader by a cut-and-paste mechanism. Cas1 alone endonucleolytically cleaves linear ssRNA, ssDNA and short (34 base) dsDNA as well as branched DNA substrates such as Holliday junctions, replication forks and 5'-flap DNA substrates. In vitro catalyzes a concerted transesterification reaction on branched DNA, as would be expected during integration of protospacers into the CRISPR leader sequence; Cas2 is not required in vitro. This reaction requires a 3'-OH group at the branch point. Genetic interactions suggest Cas1 interacts with components of the RecBC and RuvB DNA repair systems. The chain is CRISPR-associated endonuclease Cas1 (ygbT) from Escherichia coli (strain K12).